The sequence spans 116 residues: Protein Rev (116 aa).

Serine 5 and serine 8 each carry phosphoserine; by host CK2. The homomultimerization stretch occupies residues 18–26; sequence LIKFLYQSN. Residues 25-49 are disordered; it reads SNPPPSLEGTRQARRNRRRRWRERQ. Residues 34 to 50 carry the Nuclear localization signal and RNA-binding (RRE) motif; sequence TRQARRNRRRRWRERQR. Residues 36 to 47 are compositionally biased toward basic residues; sequence QARRNRRRRWRE. Positions 73–84 match the Nuclear export signal and binding to XPO1 motif; sequence LPLPPLEKLTLD. 2 positions are modified to phosphoserine; by host: serine 92 and serine 99. Residues 92-116 are disordered; it reads SGTQGVGSPQILVESPAILEPGTKE.

This sequence belongs to the HIV-1 REV protein family. As to quaternary structure, homomultimer; when bound to the RRE. Multimeric assembly is essential for activity and may involve XPO1. Binds to human KPNB1, XPO1, TNPO1, RANBP5 and IPO7. Interacts with the viral Integrase. Interacts with human KHDRBS1. Interacts with human NAP1; this interaction decreases Rev multimerization and stimulates its activity. Interacts with human DEAD-box helicases DDX3 and DDX24; these interactions may serve for viral RNA export to the cytoplasm and packaging, respectively. Interacts with human PSIP1; this interaction may inhibit HIV-1 DNA integration by promoting dissociation of the Integrase-LEDGF/p75 complex. Asymmetrically arginine dimethylated at one site by host PRMT6. Methylation impairs the RNA-binding activity and export of viral RNA from the nucleus to the cytoplasm. In terms of processing, phosphorylated by protein kinase CK2. Presence of, and maybe binding to the N-terminus of the regulatory beta subunit of CK2 is necessary for CK2-mediated Rev's phosphorylation.

It is found in the host nucleus. It localises to the host nucleolus. The protein localises to the host cytoplasm. Functionally, escorts unspliced or incompletely spliced viral pre-mRNAs (late transcripts) out of the nucleus of infected cells. These pre-mRNAs carry a recognition sequence called Rev responsive element (RRE) located in the env gene, that is not present in fully spliced viral mRNAs (early transcripts). This function is essential since most viral proteins are translated from unspliced or partially spliced pre-mRNAs which cannot exit the nucleus by the pathway used by fully processed cellular mRNAs. Rev itself is translated from a fully spliced mRNA that readily exits the nucleus. Rev's nuclear localization signal (NLS) binds directly to KPNB1/Importin beta-1 without previous binding to KPNA1/Importin alpha-1. KPNB1 binds to the GDP bound form of RAN (Ran-GDP) and targets Rev to the nucleus. In the nucleus, the conversion from Ran-GDP to Ran-GTP dissociates Rev from KPNB1 and allows Rev's binding to the RRE in viral pre-mRNAs. Rev multimerization on the RRE via cooperative assembly exposes its nuclear export signal (NES) to the surface. Rev can then form a complex with XPO1/CRM1 and Ran-GTP, leading to nuclear export of the complex. Conversion from Ran-GTP to Ran-GDP mediates dissociation of the Rev/RRE/XPO1/RAN complex, so that Rev can return to the nucleus for a subsequent round of export. Beside KPNB1, also seems to interact with TNPO1/Transportin-1, RANBP5/IPO5 and IPO7/RANBP7 for nuclear import. The nucleoporin-like HRB/RIP is an essential cofactor that probably indirectly interacts with Rev to release HIV RNAs from the perinuclear region to the cytoplasm. The chain is Protein Rev from Human immunodeficiency virus type 1 group M subtype B (strain 89.6) (HIV-1).